The sequence spans 341 residues: Methionine import ATP-binding protein MetN 2 (341 aa).

The ABC transporter domain maps to Ile-2–Val-241. Gly-38–Ser-45 lines the ATP pocket.

Belongs to the ABC transporter superfamily. Methionine importer (TC 3.A.1.24) family. In terms of assembly, the complex is composed of two ATP-binding proteins (MetN), two transmembrane proteins (MetI) and a solute-binding protein (MetQ).

The protein localises to the cell membrane. The enzyme catalyses L-methionine(out) + ATP + H2O = L-methionine(in) + ADP + phosphate + H(+). It catalyses the reaction D-methionine(out) + ATP + H2O = D-methionine(in) + ADP + phosphate + H(+). Part of the ABC transporter complex MetNIQ involved in methionine import. Responsible for energy coupling to the transport system. The sequence is that of Methionine import ATP-binding protein MetN 2 from Bacillus thuringiensis subsp. konkukian (strain 97-27).